Consider the following 493-residue polypeptide: 3-octaprenyl-4-hydroxybenzoate carboxy-lyase (493 aa).

Asparagine 172 is a binding site for Mn(2+). Prenylated FMN-binding positions include 175 to 177 (IYR), 189 to 191 (RWL), and 194 to 195 (RG). Glutamate 238 is a Mn(2+) binding site. Aspartate 287 acts as the Proton donor in catalysis.

The protein belongs to the UbiD family. In terms of assembly, homohexamer. Requires prenylated FMN as cofactor. Mn(2+) is required as a cofactor.

It localises to the cell membrane. It catalyses the reaction a 4-hydroxy-3-(all-trans-polyprenyl)benzoate + H(+) = a 2-(all-trans-polyprenyl)phenol + CO2. Its pathway is cofactor biosynthesis; ubiquinone biosynthesis. In terms of biological role, catalyzes the decarboxylation of 3-octaprenyl-4-hydroxy benzoate to 2-octaprenylphenol, an intermediate step in ubiquinone biosynthesis. The sequence is that of 3-octaprenyl-4-hydroxybenzoate carboxy-lyase from Shewanella loihica (strain ATCC BAA-1088 / PV-4).